The sequence spans 1323 residues: Clustered mitochondria protein homolog (1323 aa).

One copy of the TPR 1 repeat lies at 103–141; that stretch reads KEKPYNLAAIYDHLNKFREVIGLHFLDKYSSEVGVLSGV. Residues 149–186 are disordered; it reads LQDVKETEPETQDDKDKETDETKSTKEDSNQTEEKKSE. The segment covering 150–186 has biased composition (basic and acidic residues); it reads QDVKETEPETQDDKDKETDETKSTKEDSNQTEEKKSE. One can recognise a Clu domain in the interval 351–608; sequence FANQPDASRS…RATPLDIEFI (258 aa). One copy of the TPR 2 repeat lies at 530–563; that stretch reads CYGLSTDGSKIFSDSSFENVLKPIAEAFHLKPHP. Residues 764–801 show a composition bias toward basic and acidic residues; the sequence is NEEEISKRKEESEKKATEGKDQDKEEEKANDNEKNKED. Residues 764–808 form a disordered region; sequence NEEEISKRKEESEKKATEGKDQDKEEEKANDNEKNKEDDKEEVSN. TPR repeat units lie at residues 1042-1076, 1099-1132, 1141-1174, and 1183-1216; these read LSVY…KSEA, ITAY…WTLV, VNTY…STKL, and GMLR…FTKF. A disordered region spans residues 1250–1323; the sequence is KALAQQASAS…KKSNNKKSKK (74 aa). Residues 1308 to 1323 are compositionally biased toward basic residues; the sequence is PKKQLKKKSNNKKSKK.

This sequence belongs to the CLU family. In terms of assembly, may associate with the eukaryotic translation initiation factor 3 (eIF-3) complex.

Its subcellular location is the cytoplasm. Its function is as follows. mRNA-binding protein involved in proper cytoplasmic distribution of mitochondria. This chain is Clustered mitochondria protein homolog, found in Debaryomyces hansenii (strain ATCC 36239 / CBS 767 / BCRC 21394 / JCM 1990 / NBRC 0083 / IGC 2968) (Yeast).